The primary structure comprises 80 residues: Adipogenin (80 aa).

The helical transmembrane segment at Phe16–Leu36 threads the bilayer. Ser63 is subject to Phosphoserine.

Belongs to the adipogenin family. Selectively expressed in adipose tissue where it is particularly enriched in brown adipose tissue. In adipose tissue, expressed exclusively in adipocytes and not in the stromal-vascular cell population. Expressed at much lower levels in heart, stomach and muscle and barely detected in kidney and lung.

It localises to the membrane. Its subcellular location is the nucleus. Functionally, plays a role in stimulating adipocyte differentiation and development. In Mus musculus (Mouse), this protein is Adipogenin (Adig).